The following is a 1077-amino-acid chain: Histone deacetylase 4 (1077 aa).

Residues 66–169 (REQQLQQELL…GKESAVASTE (104 aa)) are a coiled coil. The interaction with MEF2A stretch occupies residues 117 to 312 (MLAMKHQQEL…NSSSGNVSTE (196 aa)). The span at 132-162 (KLERHRQEQELEKQHREQKLQQLKNKEKGKE) shows a compositional bias: basic and acidic residues. 3 disordered regions span residues 132-167 (KLER…AVAS), 204-225 (KTQH…ASYN), and 239-327 (PLRK…AETS). Over residues 205 to 224 (TQHSSLDQSSPPQSGVSASY) the composition is skewed to polar residues. The residue at position 209 (S209) is a Phosphoserine. At S245 the chain carries Phosphoserine; by CaMK4 and SIK1. Basic and acidic residues predominate over residues 258–273 (KVAERRSSPLLRRKDG). Residues 289-310 (SACSSAPGSGPSSPNSSSGNVS) show a composition bias toward low complexity. A PxLPxI/L motif; mediates interaction with ANKRA2 and 14-3-3 proteins motif is present at residues 348-353 (PSLPNI). Residue S349 is modified to Phosphoserine. Residue S466 is modified to Phosphoserine; by CaMK4 and SIK1. 3 disordered regions span residues 508 to 530 (SKPS…ELRE), 542 to 582 (RLPG…RPAT), and 623 to 646 (RPLS…EPPT). The segment covering 515-530 (RQPESHPEETEEELRE) has biased composition (basic and acidic residues). Residue K557 forms a Glycyl lysine isopeptide (Lys-Gly) (interchain with G-Cter in SUMO) linkage. 3 positions are modified to phosphoserine: S563, S630, and S631. Residues 627 to 639 (RAQSSPASATFPM) are compositionally biased toward polar residues. The histone deacetylase stretch occupies residues 653 to 1077 (GLVYDTLMLK…EEPMEEEPPL (425 aa)). 4 residues coordinate Zn(2+): C665, C667, H673, and C744. The active site involves H796. Residues 1044–1077 (EEAETVTAMASLSVGVKPAEKRSEEEPMEEEPPL) carry the Nuclear export signal motif. The interval 1052 to 1077 (MASLSVGVKPAEKRSEEEPMEEEPPL) is disordered.

The protein belongs to the histone deacetylase family. HD type 2 subfamily. Homodimer. Homodimerization via its N-terminal domain. Interacts with HDAC7. Interacts with MEF2A, MEF2C, MEF2D, MORC2 and NR2C1. Interacts with a 14-3-3 chaperone proteins in a phosphorylation dependent manner. Interacts with 14-3-3 protein YWHAB. Interacts with KDM5B and AHRR. Interacts with BTBD14B. Interacts with MYOCD. Interacts (via PxLPxI/L motif) with ANKRA2 (via ankyrin repeats). Interacts with CUL7 (as part of the 3M complex); negatively regulated by ANKRA2. Interacts with EP300 in the presence of TFAP2C. Interacts with HSPA1A and HSPA1B leading to their deacetylation at 'Lys-77'. Interacts with ZBTB7B; the interaction allows the recruitment of HDAC4 on CD8 loci for deacetylation and possible inhibition of CD8 genes expression. Interacts with DHX36. Interacts with SIK3; this interaction leads to HDAC4 retention in the cytoplasm. In terms of processing, phosphorylated by CaMK4 at Ser-245, Ser-466 and Ser-630. Phosphorylation at other residues by CaMK2D is required for the interaction with 14-3-3. Phosphorylation at Ser-349, within the PxLPxI/L motif, impairs the binding of ANKRA2 but generates a high-affinity docking site for 14-3-3. Sumoylation on Lys-557 is promoted by the E3 SUMO-protein ligase RANBP2, and prevented by phosphorylation by CaMK4.

It is found in the nucleus. The protein localises to the cytoplasm. It catalyses the reaction N(6)-acetyl-L-lysyl-[histone] + H2O = L-lysyl-[histone] + acetate. Its function is as follows. Responsible for the deacetylation of lysine residues on the N-terminal part of the core histones (H2A, H2B, H3 and H4). Histone deacetylation gives a tag for epigenetic repression and plays an important role in transcriptional regulation, cell cycle progression and developmental events. Histone deacetylases act via the formation of large multiprotein complexes. Involved in muscle maturation via its interaction with the myocyte enhancer factors such as MEF2A, MEF2C and MEF2D. Deacetylates HSPA1A and HSPA1B at 'Lys-77' leading to their preferential binding to co-chaperone STUB1. This chain is Histone deacetylase 4 (Hdac4), found in Rattus norvegicus (Rat).